Consider the following 700-residue polypeptide: Glycine--tRNA ligase beta subunit (700 aa).

Belongs to the class-II aminoacyl-tRNA synthetase family. Tetramer of two alpha and two beta subunits.

The protein resides in the cytoplasm. It carries out the reaction tRNA(Gly) + glycine + ATP = glycyl-tRNA(Gly) + AMP + diphosphate. The sequence is that of Glycine--tRNA ligase beta subunit from Helicobacter pylori (strain Shi470).